A 265-amino-acid polypeptide reads, in one-letter code: MSPNSSGLAVRVIPCLDVDDGRVVKGVNFENLRDAGDPVELAAVYDAEGADELTFLDVTASSSGRATMLDVVRRTAEQVFIPLTVGGGVRTVADVDVLLRAGADKVSVNTAAIARPELLEEMARQFGSQCIVLSVDARTVPPGAVPTPSGWEVTTHGGRRGTGIDAVEWASRGADLGVGEILLNSMDADGTKAGFDLEMLQAVRSAVTVPVIASGGAGAAEHFAPAIEAGADAVLAASVFHFRELTIGQVKAAMAEAGIPVRMVR.

Active-site residues include Asp17 and Asp136.

It belongs to the HisA/HisF family. As to quaternary structure, heterodimer of HisH and HisF.

The protein localises to the cytoplasm. The enzyme catalyses 5-[(5-phospho-1-deoxy-D-ribulos-1-ylimino)methylamino]-1-(5-phospho-beta-D-ribosyl)imidazole-4-carboxamide + L-glutamine = D-erythro-1-(imidazol-4-yl)glycerol 3-phosphate + 5-amino-1-(5-phospho-beta-D-ribosyl)imidazole-4-carboxamide + L-glutamate + H(+). The protein operates within amino-acid biosynthesis; L-histidine biosynthesis; L-histidine from 5-phospho-alpha-D-ribose 1-diphosphate: step 5/9. Its function is as follows. IGPS catalyzes the conversion of PRFAR and glutamine to IGP, AICAR and glutamate. The HisF subunit catalyzes the cyclization activity that produces IGP and AICAR from PRFAR using the ammonia provided by the HisH subunit. The chain is Imidazole glycerol phosphate synthase subunit HisF from Mycobacterium avium (strain 104).